A 243-amino-acid polypeptide reads, in one-letter code: Toxin CcTX-1 (243 aa).

Residues 1–25 (SSPEKKNDMSKPGRMRFDNKKEPRS) are compositionally biased toward basic and acidic residues. The segment at 1-48 (SSPEKKNDMSKPGRMRFDNKKEPRSSAKNSGNGYGCVDVNAGREPLTG) is disordered.

Contains disulfide bonds. As to expression, nematocytes.

Its subcellular location is the secreted. It is found in the nematocyst. The protein resides in the target cell membrane. In terms of biological role, has potent hemolytic activity. Is lethal to crayfish. Causes cutaneous inflammation in humans. May act as a pore-forming toxin, disrupting normal transmembrane ion concentration gradients in susceptible cells. In Cyanea capillata (Lion's mane jellyfish), this protein is Toxin CcTX-1.